The chain runs to 431 residues: Gamma conglutin 1 (431 aa).

An N-terminal signal peptide occupies residues 1–24; the sequence is MASFLHNFLLFFCSLSLIILTSSA. A Peptidase A1 domain is found at 51 to 407; it reads HVVQIHKRTP…DLMNSRLGFS (357 aa). Intrachain disulfides connect Cys-79/Cys-168, Cys-93/Cys-106, Cys-98/Cys-123, Cys-109/Cys-118, and Cys-322/Cys-369.

It belongs to the peptidase A1 family. In terms of assembly, two-subunit monomeric unit made of alpha and beta subunits coupled by disulfide bonds (at pH 4.5 and under non-reducing conditions). Monomeric alpha and beta subunits in reducing conditions. Can also form oligomers including dimer, tetramer and cyclic hexamer (trimer of dimers) (at pH &gt; 5.5). Component of globulins complexes which accumulate in seeds. Interacts with flavonoids (e.g. apigenin glucosides) present in globulins complexes.

It localises to the secreted. The protein localises to the extracellular space. Sulfur-rich seed storage protein that remains undegraded at germination. The sequence is that of Gamma conglutin 1 from Prunus dulcis (Almond).